The sequence spans 556 residues: Dihydroxy-acid dehydratase (556 aa).

Asp78 contacts Mg(2+). Residue Cys119 participates in [2Fe-2S] cluster binding. Asp120 and Lys121 together coordinate Mg(2+). An N6-carboxylysine modification is found at Lys121. Cys191 serves as a coordination point for [2Fe-2S] cluster. Glu442 contributes to the Mg(2+) binding site. Ser468 acts as the Proton acceptor in catalysis.

This sequence belongs to the IlvD/Edd family. Homodimer. [2Fe-2S] cluster is required as a cofactor. The cofactor is Mg(2+).

The enzyme catalyses (2R)-2,3-dihydroxy-3-methylbutanoate = 3-methyl-2-oxobutanoate + H2O. It catalyses the reaction (2R,3R)-2,3-dihydroxy-3-methylpentanoate = (S)-3-methyl-2-oxopentanoate + H2O. It participates in amino-acid biosynthesis; L-isoleucine biosynthesis; L-isoleucine from 2-oxobutanoate: step 3/4. Its pathway is amino-acid biosynthesis; L-valine biosynthesis; L-valine from pyruvate: step 3/4. In terms of biological role, functions in the biosynthesis of branched-chain amino acids. Catalyzes the dehydration of (2R,3R)-2,3-dihydroxy-3-methylpentanoate (2,3-dihydroxy-3-methylvalerate) into 2-oxo-3-methylpentanoate (2-oxo-3-methylvalerate) and of (2R)-2,3-dihydroxy-3-methylbutanoate (2,3-dihydroxyisovalerate) into 2-oxo-3-methylbutanoate (2-oxoisovalerate), the penultimate precursor to L-isoleucine and L-valine, respectively. In Clostridium kluyveri (strain NBRC 12016), this protein is Dihydroxy-acid dehydratase.